Reading from the N-terminus, the 100-residue chain is Large ribosomal subunit protein uL23 (100 aa).

It belongs to the universal ribosomal protein uL23 family. Part of the 50S ribosomal subunit. Contacts protein L29, and trigger factor when it is bound to the ribosome.

Its function is as follows. One of the early assembly proteins it binds 23S rRNA. One of the proteins that surrounds the polypeptide exit tunnel on the outside of the ribosome. Forms the main docking site for trigger factor binding to the ribosome. This chain is Large ribosomal subunit protein uL23, found in Novosphingobium aromaticivorans (strain ATCC 700278 / DSM 12444 / CCUG 56034 / CIP 105152 / NBRC 16084 / F199).